Consider the following 130-residue polypeptide: Encapsulin nanocompartment cargo protein EncC (130 aa).

Residues glutamate 31, glutamate 61, and histidine 64 each coordinate Fe cation. Positions 61–64 (EREH) match the Di-iron-binding motif motif. A disordered region spans residues 103-130 (EAVGKEGAAPSPADVTPEKRLTVGSLRR). Residues 123–130 (LTVGSLRR) form a probable targeting peptide region.

The protein belongs to the ferritin-like superfamily.

The protein localises to the encapsulin nanocompartment. Functionally, cargo protein of a type 1 encapsulin nanocompartment. May help nucleate Fe atoms in the interior of the encapsulin nanocompartment. Present in about 92 copies/encapsulin nanocompartment. In Myxococcus xanthus (strain DK1622), this protein is Encapsulin nanocompartment cargo protein EncC.